We begin with the raw amino-acid sequence, 76 residues long: Putative cation transport regulator ChaB (76 aa).

This sequence belongs to the ChaB family. Monomer.

Functionally, might be a regulator of the sodium-potassium/proton antiporter ChaA. The sequence is that of Putative cation transport regulator ChaB from Escherichia coli O157:H7.